The primary structure comprises 158 residues: Glutamyl-tRNA(Gln) amidotransferase subunit C, mitochondrial (158 aa).

It belongs to the GatC family. Subunit of the heterotrimeric GatCAB amidotransferase (AdT) complex, composed of A, B and C subunits.

The protein localises to the mitochondrion. It catalyses the reaction L-glutamyl-tRNA(Gln) + L-glutamine + ATP + H2O = L-glutaminyl-tRNA(Gln) + L-glutamate + ADP + phosphate + H(+). Allows the formation of correctly charged Gln-tRNA(Gln) through the transamidation of misacylated Glu-tRNA(Gln) in the mitochondria. The reaction takes place in the presence of glutamine and ATP through an activated gamma-phospho-Glu-tRNA(Gln). This Drosophila grimshawi (Hawaiian fruit fly) protein is Glutamyl-tRNA(Gln) amidotransferase subunit C, mitochondrial.